We begin with the raw amino-acid sequence, 403 residues long: MGCYQSRVQVEDKTNEQLDKYLVQAGKEGLLDFRILLLGAGESGKSTVVKQLKSIYKIQVDDDELHSYAVNIHKNTVLCMQVLLEAGETLGIELTDPETKKRAINVKSFQFEPEVKQMPVSIGLDIEELWRDEDIQKIWDRRSEYWFLDATPYYFENIQRFLDDDFVPTEEDCIMTRVRTTGISVTEFDEGPVHFRVVDVGGQRNERKKWIHCFDDVKALLFVVNLAGYDQVMFEDPSQNRMQESLTLFGQICNNPIFSETPTFLVLNKKDLFEQMIQKTDLSKCFPDYKGGSDVKTALEFIQMKYQQKIQESNKPLHTFHIAARYKKDIKYTWEEAKGILLEENKKVLMKATKDLKKSSKQSSKSSLGNSTQNNSNNNNNNNNSNNNNGQTTIDGATAKINS.

G2 is lipidated: N-myristoyl glycine. C3 carries S-palmitoyl cysteine lipidation. Residues 31–356 form the G-alpha domain; it reads LDFRILLLGA…KVLMKATKDL (326 aa). The G1 motif stretch occupies residues 34 to 47; the sequence is RILLLGAGESGKST. GTP contacts are provided by residues 39–46, 174–180, 199–203, 268–271, and A324; these read GAGESGKS, IMTRVRT, DVGGQ, and NKKD. Mg(2+) contacts are provided by S46 and T180. Residues 172 to 180 form a G2 motif region; sequence DCIMTRVRT. The G3 motif stretch occupies residues 195–204; it reads FRVVDVGGQR. The segment at 264 to 271 is G4 motif; that stretch reads FLVLNKKD. Residues 322–327 are G5 motif; sequence IAARYK. The interval 353–403 is disordered; that stretch reads TKDLKKSSKQSSKSSLGNSTQNNSNNNNNNNNSNNNNGQTTIDGATAKINS. Over residues 374–389 the composition is skewed to low complexity; that stretch reads NNSNNNNNNNNSNNNN. The span at 390–403 shows a compositional bias: polar residues; that stretch reads GQTTIDGATAKINS.

The protein belongs to the G-alpha family. As to quaternary structure, g proteins are composed of 3 units; alpha, beta and gamma. The alpha chain contains the guanine nucleotide binding site.

Its function is as follows. Guanine nucleotide-binding proteins (G proteins) are involved as modulators or transducers in various transmembrane signaling systems. G alpha-8 is a potential analog for the G(s)-like G-proteins which stimulate adenylate cyclase in mammals. The polypeptide is Guanine nucleotide-binding protein alpha-8 subunit (gpaH) (Dictyostelium discoideum (Social amoeba)).